The following is a 654-amino-acid chain: uncharacterized protein (654 aa).

Over residues Met1–Thr13 the composition is skewed to polar residues. Positions Met1–Arg23 are disordered. The zn(2)-C6 fungal-type DNA-binding region spans Cys25 to Cys54. The interval Arg63 to Leu96 is disordered.

Its subcellular location is the cytoplasm. The protein resides in the nucleus. This is an uncharacterized protein from Schizosaccharomyces pombe (strain 972 / ATCC 24843) (Fission yeast).